The primary structure comprises 168 residues: Small ribosomal subunit protein uS9 (168 aa).

Residues 1 to 38 (MAKIADSIDSAQADSVENVESYSTETPESAAPAAPRPV) are disordered. Positions 9–22 (DSAQADSVENVESY) are enriched in polar residues. Residues 23–37 (STETPESAAPAAPRP) show a composition bias toward low complexity.

The protein belongs to the universal ribosomal protein uS9 family.

This chain is Small ribosomal subunit protein uS9, found in Leifsonia xyli subsp. xyli (strain CTCB07).